A 488-amino-acid polypeptide reads, in one-letter code: Calcium/calmodulin-dependent protein kinase type II subunit delta (488 aa).

The residue at position 2 (Ala2) is an N-acetylalanine. Residues 14-272 (YQLFEELGKG…ASEALKHPWI (259 aa)) enclose the Protein kinase domain. ATP is bound by residues 20–28 (LGKGAFSVV) and Lys43. Catalysis depends on Asp136, which acts as the Proton acceptor. The autoinhibitory domain stretch occupies residues 283-292 (HRQETVDCLK). Phosphothreonine; by autocatalysis is present on Thr287. Residues 291 to 301 (LKKFNARRKLK) form a calmodulin-binding region. Phosphothreonine; by autocatalysis occurs at positions 306 and 307. The residue at position 315 (Ser315) is a Phosphoserine. An N6-acetyllysine modification is found at Lys317. Residues Ser318 and Ser340 each carry the phosphoserine modification. The segment at 325–350 (GVKKRKSSSSVQMMESTESSNTTIED) is disordered. Polar residues predominate over residues 332-347 (SSSVQMMESTESSNTT). Phosphothreonine is present on Thr341. A Phosphoserine modification is found at Ser343. Phosphothreonine is present on residues Thr346 and Thr347. Ser414 bears the Phosphoserine mark.

Belongs to the protein kinase superfamily. CAMK Ser/Thr protein kinase family. CaMK subfamily. As to quaternary structure, CAMK2 is composed of 4 different chains: alpha (CAMK2A), beta (CAMK2B), gamma (CAMK2G), and delta (CAMK2D). The different isoforms assemble into homo- or heteromultimeric holoenzymes composed of 12 subunits with two hexameric rings stacked one on top of the other. Interacts with RRAD and CACNB2. Autophosphorylation of Thr-287 following activation by Ca(2+)/calmodulin. Phosphorylation of Thr-287 locks the kinase into an activated state.

The protein resides in the cell membrane. The protein localises to the sarcolemma. It is found in the sarcoplasmic reticulum membrane. The catalysed reaction is L-seryl-[protein] + ATP = O-phospho-L-seryl-[protein] + ADP + H(+). It carries out the reaction L-threonyl-[protein] + ATP = O-phospho-L-threonyl-[protein] + ADP + H(+). With respect to regulation, activated by Ca(2+)/calmodulin. Binding of calmodulin results in conformational change that relieves intrasteric autoinhibition and allows autophosphorylation of Thr-287 which turns the kinase in a constitutively active form and confers to the kinase a Ca(2+)-independent activity. Calcium/calmodulin-dependent protein kinase involved in the regulation of Ca(2+) homeostatis and excitation-contraction coupling (ECC) in heart by targeting ion channels, transporters and accessory proteins involved in Ca(2+) influx into the myocyte, Ca(2+) release from the sarcoplasmic reticulum (SR), SR Ca(2+) uptake and Na(+) and K(+) channel transport. Targets also transcription factors and signaling molecules to regulate heart function. In its activated form, is involved in the pathogenesis of dilated cardiomyopathy and heart failure. Contributes to cardiac decompensation and heart failure by regulating SR Ca(2+) release via direct phosphorylation of RYR2 Ca(2+) channel on 'Ser-2808'. In the nucleus, phosphorylates the MEF2 repressor HDAC4, promoting its nuclear export and binding to 14-3-3 protein, and expression of MEF2 and genes involved in the hypertrophic program. Is essential for left ventricular remodeling responses to myocardial infarction. In pathological myocardial remodeling acts downstream of the beta adrenergic receptor signaling cascade to regulate key proteins involved in ECC. Regulates Ca(2+) influx to myocytes by binding and phosphorylating the L-type Ca(2+) channel subunit beta-2 CACNB2. In addition to Ca(2+) channels, can target and regulate the cardiac sarcolemmal Na(+) channel Nav1.5/SCN5A and the K+ channel Kv4.3/KCND3, which contribute to arrhythmogenesis in heart failure. Phosphorylates phospholamban (PLN/PLB), an endogenous inhibitor of SERCA2A/ATP2A2, contributing to the enhancement of SR Ca(2+) uptake that may be important in frequency-dependent acceleration of relaxation (FDAR) and maintenance of contractile function during acidosis. May participate in the modulation of skeletal muscle function in response to exercise, by regulating SR Ca(2+) transport through phosphorylation of PLN/PLB and triadin, a ryanodine receptor-coupling factor. In response to interferon-gamma (IFN-gamma) stimulation, catalyzes phosphorylation of STAT1, stimulating the JAK-STAT signaling pathway. In Bos taurus (Bovine), this protein is Calcium/calmodulin-dependent protein kinase type II subunit delta (CAMK2D).